We begin with the raw amino-acid sequence, 88 residues long: Small ribosomal subunit protein bS20 (88 aa).

Positions 69-88 (KNTASRKKSRLTKRFNKLTG) are disordered. Over residues 71–88 (TASRKKSRLTKRFNKLTG) the composition is skewed to basic residues.

Belongs to the bacterial ribosomal protein bS20 family.

Its function is as follows. Binds directly to 16S ribosomal RNA. The protein is Small ribosomal subunit protein bS20 of Pelotomaculum thermopropionicum (strain DSM 13744 / JCM 10971 / SI).